The primary structure comprises 312 residues: Ribosomal RNA small subunit methyltransferase H (312 aa).

S-adenosyl-L-methionine-binding positions include 33–35, aspartate 52, phenylalanine 81, aspartate 102, and glutamine 109; that span reads GGH.

The protein belongs to the methyltransferase superfamily. RsmH family.

The protein localises to the cytoplasm. The catalysed reaction is cytidine(1402) in 16S rRNA + S-adenosyl-L-methionine = N(4)-methylcytidine(1402) in 16S rRNA + S-adenosyl-L-homocysteine + H(+). Specifically methylates the N4 position of cytidine in position 1402 (C1402) of 16S rRNA. The protein is Ribosomal RNA small subunit methyltransferase H of Leuconostoc mesenteroides subsp. mesenteroides (strain ATCC 8293 / DSM 20343 / BCRC 11652 / CCM 1803 / JCM 6124 / NCDO 523 / NBRC 100496 / NCIMB 8023 / NCTC 12954 / NRRL B-1118 / 37Y).